The following is a 292-amino-acid chain: NAD kinase (292 aa).

D73 (proton acceptor) is an active-site residue. Residues 73–74, 147–148, H158, R175, D177, 188–193, and Q247 contribute to the NAD(+) site; these read DG, NE, and TGYSLS.

This sequence belongs to the NAD kinase family. A divalent metal cation is required as a cofactor.

Its subcellular location is the cytoplasm. The enzyme catalyses NAD(+) + ATP = ADP + NADP(+) + H(+). Functionally, involved in the regulation of the intracellular balance of NAD and NADP, and is a key enzyme in the biosynthesis of NADP. Catalyzes specifically the phosphorylation on 2'-hydroxyl of the adenosine moiety of NAD to yield NADP. The chain is NAD kinase from Buchnera aphidicola subsp. Acyrthosiphon pisum (strain 5A).